The sequence spans 483 residues: UDP-N-acetylmuramoyl-L-alanyl-D-glutamate--2,6-diaminopimelate ligase (483 aa).

Ser-30 lines the UDP-N-acetyl-alpha-D-muramoyl-L-alanyl-D-glutamate pocket. 109 to 115 (GTNGKTT) serves as a coordination point for ATP. Residues 151–152 (TT), Ser-178, and Arg-186 each bind UDP-N-acetyl-alpha-D-muramoyl-L-alanyl-D-glutamate. Lys-218 bears the N6-carboxylysine mark. Meso-2,6-diaminopimelate contacts are provided by residues Arg-380, 403-406 (DNPR), Gly-453, and Glu-457. A Meso-diaminopimelate recognition motif motif is present at residues 403-406 (DNPR).

Belongs to the MurCDEF family. MurE subfamily. Requires Mg(2+) as cofactor. Carboxylation is probably crucial for Mg(2+) binding and, consequently, for the gamma-phosphate positioning of ATP.

Its subcellular location is the cytoplasm. The catalysed reaction is UDP-N-acetyl-alpha-D-muramoyl-L-alanyl-D-glutamate + meso-2,6-diaminopimelate + ATP = UDP-N-acetyl-alpha-D-muramoyl-L-alanyl-gamma-D-glutamyl-meso-2,6-diaminopimelate + ADP + phosphate + H(+). Its pathway is cell wall biogenesis; peptidoglycan biosynthesis. Its function is as follows. Catalyzes the addition of meso-diaminopimelic acid to the nucleotide precursor UDP-N-acetylmuramoyl-L-alanyl-D-glutamate (UMAG) in the biosynthesis of bacterial cell-wall peptidoglycan. The chain is UDP-N-acetylmuramoyl-L-alanyl-D-glutamate--2,6-diaminopimelate ligase from Chlamydia abortus (strain DSM 27085 / S26/3) (Chlamydophila abortus).